Here is a 655-residue protein sequence, read N- to C-terminus: Very long-chain specific acyl-CoA dehydrogenase, mitochondrial (655 aa).

Residues 1 to 40 constitute a mitochondrion transit peptide; sequence MQAARMAASLGRQLLRLGGGSSRLTALLGQPRPGPARRPY. The segment at 23 to 42 is disordered; sequence RLTALLGQPRPGPARRPYAG. Positions 41-482 are catalytic; sequence AGGAAQLALD…ALQGCMDKGK (442 aa). Lysine 51 is subject to N6-acetyllysine. Lysine 71 carries the post-translational modification N6-acetyllysine; alternate. Lysine 71 is modified (N6-succinyllysine; alternate). At lysine 195 the chain carries N6-succinyllysine. 214 to 223 is an FAD binding site; that stretch reads FCLTEPSSGS. Cysteine 237 is subject to S-nitrosocysteine. Position 239 is an N6-acetyllysine; alternate (lysine 239). The residue at position 239 (lysine 239) is an N6-succinyllysine; alternate. An FAD-binding site is contributed by 249 to 251; it reads WIS. 2 positions are modified to N6-acetyllysine; alternate: lysine 276 and lysine 278. Lysine 276 and lysine 278 each carry N6-succinyllysine; alternate. Lysine 298 carries the N6-acetyllysine modification. Lysine 331 is modified (N6-acetyllysine; alternate). Lysine 331 bears the N6-succinyllysine; alternate mark. The residue at position 372 (lysine 372) is an N6-succinyllysine. 461–463 serves as a coordination point for substrate; that stretch reads FEG. Glutamate 462 functions as the Proton acceptor in the catalytic mechanism. 464 to 466 contributes to the FAD binding site; that stretch reads TND. Residue lysine 482 is modified to N6-acetyllysine; alternate. Lysine 482 carries the N6-succinyllysine; alternate modification. Positions 483–516 are membrane-anchoring; it reads ELSGLGSALKNPFGNAGLLLGEAGKQLRRRAGLG. A phosphoserine mark is found at serine 517 and serine 522. Residue lysine 550 is modified to N6-acetyllysine. N6-acetyllysine; alternate is present on lysine 556. Lysine 556 is subject to N6-succinyllysine; alternate. Position 562 (glutamine 562) interacts with FAD. An N6-succinyllysine modification is found at lysine 639.

Belongs to the acyl-CoA dehydrogenase family. Homodimer. Homodimerizes after import into the mitochondrion. It depends on FAD as a cofactor. Post-translationally, S-nitrosylation at Cys-237 in liver improves catalytic efficiency. Predominantly expressed in heart and skeletal muscle (at protein level). Also detected in kidney and liver (at protein level).

The protein localises to the mitochondrion inner membrane. The catalysed reaction is a very-long-chain 2,3-saturated fatty acyl-CoA + oxidized [electron-transfer flavoprotein] + H(+) = a very-long-chain (2E)-enoyl-CoA + reduced [electron-transfer flavoprotein]. The enzyme catalyses decanoyl-CoA + oxidized [electron-transfer flavoprotein] + H(+) = (2E)-decenoyl-CoA + reduced [electron-transfer flavoprotein]. It carries out the reaction dodecanoyl-CoA + oxidized [electron-transfer flavoprotein] + H(+) = (2E)-dodecenoyl-CoA + reduced [electron-transfer flavoprotein]. It catalyses the reaction tetradecanoyl-CoA + oxidized [electron-transfer flavoprotein] + H(+) = (2E)-tetradecenoyl-CoA + reduced [electron-transfer flavoprotein]. The catalysed reaction is oxidized [electron-transfer flavoprotein] + hexadecanoyl-CoA + H(+) = (2E)-hexadecenoyl-CoA + reduced [electron-transfer flavoprotein]. The enzyme catalyses octadecanoyl-CoA + oxidized [electron-transfer flavoprotein] + H(+) = (2E)-octadecenoyl-CoA + reduced [electron-transfer flavoprotein]. It carries out the reaction eicosanoyl-CoA + oxidized [electron-transfer flavoprotein] + H(+) = (2E)-eicosenoyl-CoA + reduced [electron-transfer flavoprotein]. It catalyses the reaction docosanoyl-CoA + oxidized [electron-transfer flavoprotein] + H(+) = (2E)-docosenoyl-CoA + reduced [electron-transfer flavoprotein]. The catalysed reaction is tetracosanoyl-CoA + oxidized [electron-transfer flavoprotein] + H(+) = (2E)-tetracosenoyl-CoA + reduced [electron-transfer flavoprotein]. The enzyme catalyses (9Z)-hexadecenoyl-CoA + oxidized [electron-transfer flavoprotein] + H(+) = (2E,9Z)-hexadecadienoyl-CoA + reduced [electron-transfer flavoprotein]. It carries out the reaction oxidized [electron-transfer flavoprotein] + (9Z)-octadecenoyl-CoA + H(+) = (2E,9Z)-octadecadienoyl-CoA + reduced [electron-transfer flavoprotein]. Its pathway is lipid metabolism; mitochondrial fatty acid beta-oxidation. Its function is as follows. Very long-chain specific acyl-CoA dehydrogenase is one of the acyl-CoA dehydrogenases that catalyze the first step of mitochondrial fatty acid beta-oxidation, an aerobic process breaking down fatty acids into acetyl-CoA and allowing the production of energy from fats. The first step of fatty acid beta-oxidation consists in the removal of one hydrogen from C-2 and C-3 of the straight-chain fatty acyl-CoA thioester, resulting in the formation of trans-2-enoyl-CoA. Among the different mitochondrial acyl-CoA dehydrogenases, very long-chain specific acyl-CoA dehydrogenase acts specifically on acyl-CoAs with saturated 12 to 24 carbons long primary chains. The polypeptide is Very long-chain specific acyl-CoA dehydrogenase, mitochondrial (Homo sapiens (Human)).